A 327-amino-acid chain; its full sequence is Probable cell division protein WhiA (327 aa).

The segment at residues 275–308 is a DNA-binding region (H-T-H motif); the sequence is SLEELGRLADPPMTKDAVAGRIRRLLSMADRKAK.

This sequence belongs to the WhiA family.

Involved in cell division and chromosome segregation. The sequence is that of Probable cell division protein WhiA from Mycobacterium marinum (strain ATCC BAA-535 / M).